The sequence spans 210 residues: N-(5'-phosphoribosyl)anthranilate isomerase (210 aa).

Belongs to the TrpF family.

The enzyme catalyses N-(5-phospho-beta-D-ribosyl)anthranilate = 1-(2-carboxyphenylamino)-1-deoxy-D-ribulose 5-phosphate. The protein operates within amino-acid biosynthesis; L-tryptophan biosynthesis; L-tryptophan from chorismate: step 3/5. This is N-(5'-phosphoribosyl)anthranilate isomerase from Staphylococcus aureus (strain bovine RF122 / ET3-1).